The following is a 92-amino-acid chain: DNA-directed RNA polymerase subunit Rpo11 (92 aa).

The protein belongs to the archaeal Rpo11/eukaryotic RPB11/RPC19 RNA polymerase subunit family. As to quaternary structure, part of the RNA polymerase complex.

It localises to the cytoplasm. The catalysed reaction is RNA(n) + a ribonucleoside 5'-triphosphate = RNA(n+1) + diphosphate. In terms of biological role, DNA-dependent RNA polymerase (RNAP) catalyzes the transcription of DNA into RNA using the four ribonucleoside triphosphates as substrates. This chain is DNA-directed RNA polymerase subunit Rpo11, found in Halorubrum lacusprofundi (strain ATCC 49239 / DSM 5036 / JCM 8891 / ACAM 34).